Here is a 249-residue protein sequence, read N- to C-terminus: Segregation and condensation protein A (249 aa).

The protein belongs to the ScpA family. As to quaternary structure, component of a cohesin-like complex composed of ScpA, ScpB and the Smc homodimer, in which ScpA and ScpB bind to the head domain of Smc. The presence of the three proteins is required for the association of the complex with DNA.

It localises to the cytoplasm. Participates in chromosomal partition during cell division. May act via the formation of a condensin-like complex containing Smc and ScpB that pull DNA away from mid-cell into both cell halves. This is Segregation and condensation protein A from Oceanobacillus iheyensis (strain DSM 14371 / CIP 107618 / JCM 11309 / KCTC 3954 / HTE831).